Reading from the N-terminus, the 192-residue chain is Fe/S biogenesis protein NfuA (192 aa).

Residues Cys-149 and Cys-152 each coordinate [4Fe-4S] cluster.

This sequence belongs to the NfuA family. As to quaternary structure, homodimer. [4Fe-4S] cluster is required as a cofactor.

Its function is as follows. Involved in iron-sulfur cluster biogenesis. Binds a 4Fe-4S cluster, can transfer this cluster to apoproteins, and thereby intervenes in the maturation of Fe/S proteins. Could also act as a scaffold/chaperone for damaged Fe/S proteins. The protein is Fe/S biogenesis protein NfuA of Shewanella putrefaciens (strain CN-32 / ATCC BAA-453).